A 260-amino-acid chain; its full sequence is Octanoyltransferase (260 aa).

The 200-residue stretch at 42–241 folds into the BPL/LPL catalytic domain; it reads PQVPDGLLLL…SFCQVFGLQA (200 aa). Substrate is bound by residues 97–104, 172–174, and 185–187; these read RGGEVTYH, AIG, and GFA. The active-site Acyl-thioester intermediate is the cysteine 203.

Belongs to the LipB family.

The protein resides in the cytoplasm. It carries out the reaction octanoyl-[ACP] + L-lysyl-[protein] = N(6)-octanoyl-L-lysyl-[protein] + holo-[ACP] + H(+). Its pathway is protein modification; protein lipoylation via endogenous pathway; protein N(6)-(lipoyl)lysine from octanoyl-[acyl-carrier-protein]: step 1/2. Functionally, catalyzes the transfer of endogenously produced octanoic acid from octanoyl-acyl-carrier-protein onto the lipoyl domains of lipoate-dependent enzymes. Lipoyl-ACP can also act as a substrate although octanoyl-ACP is likely to be the physiological substrate. The polypeptide is Octanoyltransferase (Synechococcus sp. (strain JA-3-3Ab) (Cyanobacteria bacterium Yellowstone A-Prime)).